The chain runs to 334 residues: Geranylgeranyl pyrophosphate synthase ltmG (334 aa).

Isopentenyl diphosphate-binding residues include Lys-53, Arg-56, and His-85. Positions 92 and 96 each coordinate Mg(2+). A dimethylallyl diphosphate-binding site is contributed by Arg-101. Isopentenyl diphosphate is bound at residue Arg-102. Positions 179, 180, and 213 each coordinate dimethylallyl diphosphate. Asp-216 is a Mg(2+) binding site. Residues Asn-220, Lys-230, and Lys-240 each contribute to the dimethylallyl diphosphate site.

This sequence belongs to the FPP/GGPP synthase family. Mg(2+) serves as cofactor.

The catalysed reaction is isopentenyl diphosphate + dimethylallyl diphosphate = (2E)-geranyl diphosphate + diphosphate. It carries out the reaction isopentenyl diphosphate + (2E)-geranyl diphosphate = (2E,6E)-farnesyl diphosphate + diphosphate. It catalyses the reaction isopentenyl diphosphate + (2E,6E)-farnesyl diphosphate = (2E,6E,10E)-geranylgeranyl diphosphate + diphosphate. Its pathway is secondary metabolite biosynthesis. Functionally, geranylgeranyl pyrophosphate synthase; part of the gene cluster that mediates the biosynthesis of lolitrems, indole-diterpene mycotoxins that are potent tremorgens in mammals, and are synthesized by clavicipitaceous fungal endophytes in association with their grass hosts. The geranylgeranyl diphosphate (GGPP) synthase ltmG is proposed to catalyze the first step in lolitrem biosynthesis. LtmG catalyzes a series of iterative condensations of isopentenyl diphosphate (IPP) with dimethylallyl diphosphate (DMAPP), geranyl diphosphate (GPP), and farnesyl diphosphate (FPP), to form GGPP. GGPP then condenses with indole-3-glycerol phosphate to form 3-geranylgeranylindole, an acyclic intermediate, to be incorporated into paxilline. Either ltmG or ltmC could be responsible for this step, as both are putative prenyl transferases. The FAD-dependent monooxygenase ltmM then catalyzes the epoxidation of the two terminal alkenes of the geranylgeranyl moiety, which is subsequently cyclized by ltmB, to paspaline. The cytochrome P450 monooxygenases ltmQ and ltmP can sequentially oxidize paspaline to terpendole E and terpendole F. Alternatively, ltmP converts paspaline to an intermediate which is oxidized by ltmQ to terpendole F. LtmF, ltmK, ltmE and ltmJ appear to be unique to the epichloe endophytes. The prenyltransferase ltmF is involved in the 27-hydroxyl-O-prenylation. The cytochrome P450 monooxygenase ltmK is required for the oxidative acetal ring formation. The multi-functional prenyltransferase ltmE is required for C20- and C21-prenylations of the indole ring of paspalanes and acts together with the cytochrome P450 monooxygenase ltmJ to yield lolitremanes by multiple oxidations and ring closures. The stereoisomer pairs of lolitriol and lolitrem N or lolitrem B and lolitrem F may be attributed to variations in the way in which ring closure can occur under the action of ltmJ. While the major product of this pathway is lolitrem B, the prenyl transferases and cytochrome P450 monooxygenases identified in this pathway have a remarkable versatility in their regio- and stereo-specificities to generate a diverse range of metabolites that are products of a metabolic grid rather than a linear pathway. This Epichloe festucae (strain Fl1) protein is Geranylgeranyl pyrophosphate synthase ltmG.